Here is a 70-residue protein sequence, read N- to C-terminus: Large ribosomal subunit protein eL38 (70 aa).

K4 participates in a covalent cross-link: Glycyl lysine isopeptide (Lys-Gly) (interchain with G-Cter in SUMO2). K9 carries the post-translational modification N6-acetyllysine; alternate. K9 is covalently cross-linked (Glycyl lysine isopeptide (Lys-Gly) (interchain with G-Cter in SUMO2); alternate). K67 is subject to N6-acetyllysine.

Belongs to the eukaryotic ribosomal protein eL38 family. As to quaternary structure, component of the large ribosomal subunit.

It is found in the cytoplasm. Component of the large ribosomal subunit. The ribosome is a large ribonucleoprotein complex responsible for the synthesis of proteins in the cell. This is Large ribosomal subunit protein eL38 (RPL38) from Homo sapiens (Human).